Consider the following 262-residue polypeptide: tRNA pseudouridine synthase A (262 aa).

Residue aspartate 54 is the Nucleophile of the active site. Tyrosine 113 is a binding site for substrate.

This sequence belongs to the tRNA pseudouridine synthase TruA family. Homodimer.

The catalysed reaction is uridine(38/39/40) in tRNA = pseudouridine(38/39/40) in tRNA. Formation of pseudouridine at positions 38, 39 and 40 in the anticodon stem and loop of transfer RNAs. The chain is tRNA pseudouridine synthase A from Lactobacillus acidophilus (strain ATCC 700396 / NCK56 / N2 / NCFM).